The chain runs to 225 residues: tRNA (guanine-N(7)-)-methyltransferase (225 aa).

Glu-56, Glu-81, Asp-108, and Asp-131 together coordinate S-adenosyl-L-methionine. The active site involves Asp-131. Residues Lys-135, Asp-167, and 204–207 (TKFE) each bind substrate.

This sequence belongs to the class I-like SAM-binding methyltransferase superfamily. TrmB family.

It carries out the reaction guanosine(46) in tRNA + S-adenosyl-L-methionine = N(7)-methylguanosine(46) in tRNA + S-adenosyl-L-homocysteine. Its pathway is tRNA modification; N(7)-methylguanine-tRNA biosynthesis. Its function is as follows. Catalyzes the formation of N(7)-methylguanine at position 46 (m7G46) in tRNA. In Legionella pneumophila (strain Lens), this protein is tRNA (guanine-N(7)-)-methyltransferase.